Here is a 695-residue protein sequence, read N- to C-terminus: Pre-mRNA-splicing factor clf-1 (695 aa).

16 HAT repeats span residues 52–84 (EYQGRKRKEFEDYVRRNRVRLSNWLQYAQWELE), 86–118 (KEFARARSVFERALDVHPNNTQLWIRYVQAEIK), 120–152 (RNINHARNLLDRAVTRLPRVTSLWYQYLYVMEM), 154–185 (GDIPGTRQVFDRWMKWQPDEQAWSAYIRLEKR), 187–218 (GEFDRAREIFRAFTAVHPEPRTWLKWAKFEEE), 220–259 (GTSDTVREVFQTAIQTIAETLGDDAVDERIFIAFARYEAR), 261–295 (REYERARAIYKFGLDNLPRSKSMTLHAHYTTFEKQ), 305–337 (VILTKRRRLYEEQVKENAKNYDVWFDFARLEES), 339–373 (GDVDRTREVYERAIAQVPPTQEKRHWRRYIFLFLF), 383–419 (KDIGRARQIYDTCLNLIPHKKFTFAKVWVAKAHFEIR), 421–452 (GQLTTARKTLGRAIGMCPKDKIFKEYILLEQK), 454–486 (YEFERCRTLYEKHVMYNPANCQTWIKWAELERG), 488–522 (DDLERTRAIFELAVSQPILDMPEVVWKAYIDFEEE), 524–555 (GEYERTRALYERLLEKADHPKVWISYAQFEIN), 578–616 (EAKARARKIFERAHKSMKERELKAERVSLLNAWLAFEKT), and 621–654 (EDIEKIQKQMPRKTKKKRKLEDDTWEEYVDYIFP).

Belongs to the crooked-neck family. In terms of assembly, associated with the spliceosome.

The protein localises to the nucleus. Functionally, involved in pre-mRNA splicing and cell cycle progression. Required for the spliceosome assembly and initiation of the DNA replication. The sequence is that of Pre-mRNA-splicing factor clf-1 (clf-1) from Neurospora crassa (strain ATCC 24698 / 74-OR23-1A / CBS 708.71 / DSM 1257 / FGSC 987).